The primary structure comprises 873 residues: DNA helicase/primase complex-associated protein (873 aa).

The disordered stretch occupies residues 394-422 (PPLPRDDGDGENNVVEVSSSTGGAHPPSD).

Belongs to the herpesviridae HEPA family. In terms of assembly, associates with the primase and the helicase to form the helicase-primase complex. Interacts with the origin-binding protein. Interacts with the polymerase catalytic subunit.

It is found in the host nucleus. Functionally, component of the helicase/primase complex. Unwinds the DNA at the replication forks and generates single-stranded DNA for both leading and lagging strand synthesis. The primase synthesizes short RNA primers on the lagging strand that the polymerase presumably elongates using dNTPs. The primase-associated factor has no known catalytic activity in the complex and may serve to facilitate the formation of the replisome by directly interacting with the origin-binding protein and the polymerase. This Human cytomegalovirus (strain Merlin) (HHV-5) protein is DNA helicase/primase complex-associated protein (UL102).